A 176-amino-acid chain; its full sequence is MFRGTTIVAVRRGDRVSVAGDGQVTFGDSTILKHGAKKIRRLYNGEVIVGFAGSVADAMTLSQKFEEKLEQYGGNLKRAAVELAQEWRKDKILRKLEALLIAADKKDTLLISGTGEVIEPDEDVIGIGSGGNYAMAAALALRYNTDLDTEEIARKALEIASKICVYTNNNITVETL.

Residue Thr5 is part of the active site. Ser161, Cys164, and Thr167 together coordinate Na(+).

Belongs to the peptidase T1B family. HslV subfamily. As to quaternary structure, a double ring-shaped homohexamer of HslV is capped on each side by a ring-shaped HslU homohexamer. The assembly of the HslU/HslV complex is dependent on binding of ATP.

It localises to the cytoplasm. The catalysed reaction is ATP-dependent cleavage of peptide bonds with broad specificity.. With respect to regulation, allosterically activated by HslU binding. Protease subunit of a proteasome-like degradation complex believed to be a general protein degrading machinery. In Caldanaerobacter subterraneus subsp. tengcongensis (strain DSM 15242 / JCM 11007 / NBRC 100824 / MB4) (Thermoanaerobacter tengcongensis), this protein is ATP-dependent protease subunit HslV.